Here is a 318-residue protein sequence, read N- to C-terminus: MLHHHCRRNPELQEESQIQAAVAAGDVHTVRKMLEQGYSPNGRDANGWTLLHFSAARGKERCVRVFLEHGADPTVKDLIGGFTALHYAAMHGRARIARLMLESEYRSDIINAKSNDGWTPLHVAAHYGRDSFVRLLLEFKAEVDPLSDKGTTPLQLAIIRERSSCVKILLDHNANIDIQNGFLLRYAVIKSNHSYCRMFLQRGADTNLGRLEDGQTPLHLSALRDDVLCARMLYNYGADTNTRNYEGQTPLAVSISISGSSRPCLDFLQEVTRQPRNLQDLCRIKIRQCIGLQNLKLLDELPIAKVMKDYLKHKSDDI.

ANK repeat units lie at residues 13 to 42 (QEES…SPNG), 46 to 75 (NGWT…DPTV), 80 to 109 (GGFT…RSDI), 116 to 145 (DGWT…EVDP), 149 to 178 (KGTT…NIDI), 180 to 208 (NGFL…DTNL), and 213 to 242 (DGQT…DTNT). Positions 265–318 (LDFLQEVTRQPRNLQDLCRIKIRQCIGLQNLKLLDELPIAKVMKDYLKHKSDDI) constitute an SOCS box domain.

It belongs to the ankyrin SOCS box (ASB) family. In terms of assembly, interacts with CUL5. Interacts with RNF7. Interacts with PSRC1.

The protein operates within protein modification; protein ubiquitination. Its function is as follows. Probable substrate-recognition component of a SCF-like ECS (Elongin-Cullin-SOCS-box protein) E3 ubiquitin-protein ligase complex which mediates the ubiquitination and subsequent proteasomal degradation of target proteins. Plays a role in spindle dynamics and genome integrity by targeting the mitotic progression protein PSRC1 for proteasomal degradation in a cell cycle-dependent manner. Also participates in meiosis by mediating the proper attachment between kinetochores and microtubules. The protein is Ankyrin repeat and SOCS box protein 7 (ASB7) of Pongo abelii (Sumatran orangutan).